The sequence spans 451 residues: Cyclin-dependent kinase 18 (451 aa).

A phosphoserine mark is found at serine 12, serine 51, serine 66, serine 75, and serine 109. The region spanning 121-402 (YVKLDKLGEG…AEAALNHPYF (282 aa)) is the Protein kinase domain. Residues 127–135 (LGEGTYATV) and lysine 150 each bind ATP. Aspartate 242 functions as the Proton acceptor in the catalytic mechanism. Phosphoserine is present on residues serine 417 and serine 420.

This sequence belongs to the protein kinase superfamily. CMGC Ser/Thr protein kinase family. CDC2/CDKX subfamily. In brain, kidney, intestine and at a much lower level, in fetal tissues.

It catalyses the reaction L-seryl-[protein] + ATP = O-phospho-L-seryl-[protein] + ADP + H(+). The enzyme catalyses L-threonyl-[protein] + ATP = O-phospho-L-threonyl-[protein] + ADP + H(+). Its function is as follows. May play a role in signal transduction cascades in terminally differentiated cells. In Mus musculus (Mouse), this protein is Cyclin-dependent kinase 18 (Cdk18).